We begin with the raw amino-acid sequence, 339 residues long: Dihydroorotate dehydrogenase (quinone) (339 aa).

FMN is bound by residues 62-66 and T86; that span reads AGMDK. K66 serves as a coordination point for substrate. Position 111–115 (111–115) interacts with substrate; that stretch reads NRMGF. FMN is bound by residues N139 and N172. N172 is a substrate binding site. S175 functions as the Nucleophile in the catalytic mechanism. Position 177 (N177) interacts with substrate. Residues K217 and T245 each contribute to the FMN site. 246 to 247 lines the substrate pocket; sequence NT. FMN-binding positions include G268, G297, and 318–319; that span reads YS.

It belongs to the dihydroorotate dehydrogenase family. Type 2 subfamily. As to quaternary structure, monomer. Requires FMN as cofactor.

It localises to the cell membrane. The enzyme catalyses (S)-dihydroorotate + a quinone = orotate + a quinol. The protein operates within pyrimidine metabolism; UMP biosynthesis via de novo pathway; orotate from (S)-dihydroorotate (quinone route): step 1/1. Functionally, catalyzes the conversion of dihydroorotate to orotate with quinone as electron acceptor. This Shewanella pealeana (strain ATCC 700345 / ANG-SQ1) protein is Dihydroorotate dehydrogenase (quinone).